A 201-amino-acid chain; its full sequence is Translation initiation factor IF-3 (201 aa).

A disordered region spans residues 167-201 (PHRGAKTRARARHPGEPAGGPPPKPTAGDSKAAPN). Residues 169 to 178 (RGAKTRARAR) show a composition bias toward basic residues.

The protein belongs to the IF-3 family. In terms of assembly, monomer.

It localises to the cytoplasm. IF-3 binds to the 30S ribosomal subunit and shifts the equilibrium between 70S ribosomes and their 50S and 30S subunits in favor of the free subunits, thus enhancing the availability of 30S subunits on which protein synthesis initiation begins. The polypeptide is Translation initiation factor IF-3 (Mycobacterium bovis (strain ATCC BAA-935 / AF2122/97)).